Here is a 457-residue protein sequence, read N- to C-terminus: tRNA modification GTPase MnmE (457 aa).

(6S)-5-formyl-5,6,7,8-tetrahydrofolate-binding residues include Arg22, Glu86, and Arg125. The TrmE-type G domain maps to 221–381 (GLRAVLAGRP…LEAEVARVAG (161 aa)). Asn231 is a K(+) binding site. Residues 231–236 (NVGKSS), 250–256 (TPIPGTT), and 275–278 (DTAG) each bind GTP. Mg(2+) is bound at residue Ser235. K(+) contacts are provided by Thr250, Ile252, and Thr255. A Mg(2+)-binding site is contributed by Thr256. Position 457 (Lys457) interacts with (6S)-5-formyl-5,6,7,8-tetrahydrofolate.

It belongs to the TRAFAC class TrmE-Era-EngA-EngB-Septin-like GTPase superfamily. TrmE GTPase family. In terms of assembly, homodimer. Heterotetramer of two MnmE and two MnmG subunits. K(+) is required as a cofactor.

It localises to the cytoplasm. Its function is as follows. Exhibits a very high intrinsic GTPase hydrolysis rate. Involved in the addition of a carboxymethylaminomethyl (cmnm) group at the wobble position (U34) of certain tRNAs, forming tRNA-cmnm(5)s(2)U34. This is tRNA modification GTPase MnmE from Symbiobacterium thermophilum (strain DSM 24528 / JCM 14929 / IAM 14863 / T).